A 281-amino-acid polypeptide reads, in one-letter code: L-cysteine S-thiosulfotransferase subunit SoxA (281 aa).

Positions 1-25 are cleaved as a signal peptide; it reads MTKHGFLLATLVLAGATLPIGPVTA. A disulfide bridge links Cys99 with Cys130. The Cytochrome c domain maps to 175-281; the sequence is AAYEQGKRFY…LELNGPGARK (107 aa). 2 residues coordinate heme: Cys195 and His199. Arg238 contacts substrate. Residue Cys242 coordinates heme. Residue Cys242 is the Cysteine persulfide intermediate of the active site.

The protein belongs to the SoxA family. As to quaternary structure, heterodimer of SoxA and SoxX. Heme is required as a cofactor. Post-translationally, cysteine persulfide at Cys-242.

It localises to the periplasm. The enzyme catalyses L-cysteinyl-[SoxY protein] + thiosulfate + 2 Fe(III)-[cytochrome c] = S-sulfosulfanyl-L-cysteinyl-[SoxY protein] + 2 Fe(II)-[cytochrome c] + 2 H(+). It carries out the reaction S-sulfanyl-L-cysteinyl-[SoxY protein] + thiosulfate + 2 Fe(III)-[cytochrome c] = S-(2-sulfodisulfanyl)-L-cysteinyl-[SoxY protein] + 2 Fe(II)-[cytochrome c] + 2 H(+). In terms of biological role, C-type monoheme cytochrome, which is part of the SoxAX cytochrome complex involved in sulfur oxidation. The SoxAX complex catalyzes the formation of a heterodisulfide bond between the conserved cysteine residue on a sulfur carrier SoxYZ complex subunit SoxY and thiosulfate or other inorganic sulfur substrates. This leads to the intermediary formation of conspicuous sulfur globules inside of the cells. This Allochromatium vinosum (Chromatium vinosum) protein is L-cysteine S-thiosulfotransferase subunit SoxA.